We begin with the raw amino-acid sequence, 386 residues long: Histone-lysine N-methyltransferase SETD7 (386 aa).

Acidic residues predominate over residues 1–12 (MDSSDDEIACDE). The segment at 1–21 (MDSSDDEIACDEGDYKGAKDD) is disordered. MORN repeat units lie at residues 15-38 (YKGA…SGDE), 39-61 (FIGA…DDST), 62-84 (LEGN…DGSI), and 109-131 (FRGQ…DGGS). In terms of domain architecture, SET spans 222–344 (ELVYAAPSKI…EGDELTVHYT (123 aa)). Residues 234–236 (AGE), Asn-304, and His-305 contribute to the S-adenosyl-L-methionine site.

The protein belongs to the class V-like SAM-binding methyltransferase superfamily. Histone-lysine methyltransferase family. SET7 subfamily.

It is found in the nucleus. The protein localises to the chromosome. The enzyme catalyses L-lysyl(4)-[histone H3] + S-adenosyl-L-methionine = N(6)-methyl-L-lysyl(4)-[histone H3] + S-adenosyl-L-homocysteine + H(+). It catalyses the reaction L-lysyl-[protein] + S-adenosyl-L-methionine = N(6)-methyl-L-lysyl-[protein] + S-adenosyl-L-homocysteine + H(+). Histone methyltransferase that specifically monomethylates 'Lys-4' of histone H3. H3 'Lys-4' methylation represents a specific tag for epigenetic transcriptional activation. Plays a central role in the transcriptional activation of genes. Also has methyltransferase activity toward non-histone proteins. This chain is Histone-lysine N-methyltransferase SETD7 (setd7), found in Halocynthia roretzi (Sea squirt).